The primary structure comprises 373 residues: Probable jasmonic acid carboxyl methyltransferase 1 (373 aa).

Tyrosine 18 is an S-adenosyl-L-homocysteine binding site. Glutamine 25 contacts jasmonate. S-adenosyl-L-homocysteine is bound by residues cysteine 59, asparagine 64, aspartate 96, leucine 97, serine 135, and phenylalanine 136. Residues histidine 156 and tryptophan 157 each coordinate jasmonate. Mg(2+) is bound by residues asparagine 174, aspartate 260, phenylalanine 262, and asparagine 263.

Belongs to the methyltransferase superfamily. Type-7 methyltransferase family. It depends on Mg(2+) as a cofactor.

Its subcellular location is the cytoplasm. The protein resides in the nucleus. It catalyses the reaction jasmonate + S-adenosyl-L-methionine = methyl (-)-jasmonate + S-adenosyl-L-homocysteine. It participates in lipid metabolism; oxylipin biosynthesis. Catalyzes the methylation of jasmonate into methyljasmonate, a plant volatile that acts as an important cellular regulator mediating diverse developmental processes and defense responses. The chain is Probable jasmonic acid carboxyl methyltransferase 1 from Theobroma cacao (Cacao).